We begin with the raw amino-acid sequence, 310 residues long: Protoheme IX farnesyltransferase 2 (310 aa).

9 helical membrane-spanning segments follow: residues 21 to 41 (IWYL…GIYG), 46 to 66 (IATW…ANVL), 99 to 119 (FGLF…LTTT), 125 to 145 (WAAA…SYML), 153 to 173 (IVLG…AVTT), 180 to 200 (GLVM…ALTL), 226 to 246 (VIAV…LITL), 256 to 276 (VYLA…AWVV), and 284 to 304 (AWVL…ALMV).

This sequence belongs to the UbiA prenyltransferase family. Protoheme IX farnesyltransferase subfamily.

Its subcellular location is the cell membrane. It carries out the reaction heme b + (2E,6E)-farnesyl diphosphate + H2O = Fe(II)-heme o + diphosphate. The protein operates within porphyrin-containing compound metabolism; heme O biosynthesis; heme O from protoheme: step 1/1. Converts heme B (protoheme IX) to heme O by substitution of the vinyl group on carbon 2 of heme B porphyrin ring with a hydroxyethyl farnesyl side group. The chain is Protoheme IX farnesyltransferase 2 from Cenarchaeum symbiosum (strain A).